Reading from the N-terminus, the 146-residue chain is Large ribosomal subunit protein uL15 (146 aa).

The span at 1 to 13 (MKLHELRPAEGSR) shows a compositional bias: basic and acidic residues. Residues 1–55 (MKLHELRPAEGSRKSPKRVGRGTGSGLGKTSARGENGQNSRSGGGVRPGFEGGQM) are disordered. A compositionally biased stretch (gly residues) spans 42-52 (SGGGVRPGFEG).

Belongs to the universal ribosomal protein uL15 family. Part of the 50S ribosomal subunit.

Its function is as follows. Binds to the 23S rRNA. In Clostridium tetani (strain Massachusetts / E88), this protein is Large ribosomal subunit protein uL15.